Consider the following 696-residue polypeptide: Polyribonucleotide nucleotidyltransferase (696 aa).

The Mg(2+) site is built by D483 and D489. Positions 550–609 (PRITTIYVKTDKIRDVIGSGGKNIRGITEATGVTIDIDDTGKINIASTDKAACDLAIKMI) constitute a KH domain. An S1 motif domain is found at 619-687 (GKLYMGLVKK…KQGKIKLSRK (69 aa)).

This sequence belongs to the polyribonucleotide nucleotidyltransferase family. It depends on Mg(2+) as a cofactor.

Its subcellular location is the cytoplasm. The enzyme catalyses RNA(n+1) + phosphate = RNA(n) + a ribonucleoside 5'-diphosphate. Functionally, involved in mRNA degradation. Catalyzes the phosphorolysis of single-stranded polyribonucleotides processively in the 3'- to 5'-direction. This chain is Polyribonucleotide nucleotidyltransferase, found in Geotalea uraniireducens (strain Rf4) (Geobacter uraniireducens).